Reading from the N-terminus, the 852-residue chain is Lon protease homolog 2, peroxisomal (852 aa).

An N-acetylserine modification is found at Ser2. The region spanning 13–222 (LPLLLTHEGV…MTIPLLVRQI (210 aa)) is the Lon N-terminal domain. Residue 375 to 382 (GPPGVGKT) coordinates ATP. The Lon proteolytic domain occupies 651 to 837 (LSQPGVAIGL…DEVLNAAFDG (187 aa)). Catalysis depends on residues Ser743 and Lys786. A Microbody targeting signal motif is present at residues 850–852 (SKL).

This sequence belongs to the peptidase S16 family. In terms of assembly, interacts with PEX5. Interacts with TYSND1. May interact with enzymes involved in beta-oxidation of fatty acids, including ACOX1/AOX.

It localises to the peroxisome matrix. It catalyses the reaction Hydrolysis of proteins in presence of ATP.. ATP-dependent serine protease that mediates the selective degradation of misfolded and unassembled polypeptides in the peroxisomal matrix. Necessary for type 2 peroxisome targeting signal (PTS2)-containing protein processing and facilitates peroxisome matrix protein import. May indirectly regulate peroxisomal fatty acid beta-oxidation through degradation of the self-processed forms of TYSND1. The sequence is that of Lon protease homolog 2, peroxisomal from Pongo abelii (Sumatran orangutan).